The primary structure comprises 73 residues: MVSIRLTFALAIVAIIFAFSVDAAYKKPPFNGSIFGKRSNTMTDYEFTSRALSAICEVASETCTAWMSRQESN.

The first 23 residues, 1-23 (MVSIRLTFALAIVAIIFAFSVDA), serve as a signal peptide directing secretion. Phe-35 carries the phenylalanine amide modification. The propeptide occupies 39–73 (SNTMTDYEFTSRALSAICEVASETCTAWMSRQESN).

Expressed in brain, the retrocerebral complex and in ventral, thoracic and abdominal ganglia (at protein level).

It is found in the secreted. The chain is SIFamide-related peptide from Camponotus floridanus (Florida carpenter ant).